A 315-amino-acid polypeptide reads, in one-letter code: 1-aminocyclopropane-1-carboxylate oxidase 1 (315 aa).

Positions 153-253 constitute a Fe2OG dioxygenase domain; that stretch reads PNFGTKVSNY…RMSLASFYNP (101 aa). Residues His-177, Asp-179, and His-234 each contribute to the Fe cation site.

It belongs to the iron/ascorbate-dependent oxidoreductase family. The cofactor is Fe cation. As to expression, predominantly expressed in the petals and the stigma and style.

It catalyses the reaction 1-aminocyclopropane-1-carboxylate + L-ascorbate + O2 = ethene + L-dehydroascorbate + hydrogen cyanide + CO2 + 2 H2O. Its pathway is alkene biosynthesis; ethylene biosynthesis via S-adenosyl-L-methionine; ethylene from S-adenosyl-L-methionine: step 2/2. The chain is 1-aminocyclopropane-1-carboxylate oxidase 1 (ACO1) from Solanum lycopersicum (Tomato).